A 438-amino-acid chain; its full sequence is tRNA modification GTPase MnmE (438 aa).

Positions 20, 76, and 115 each coordinate (6S)-5-formyl-5,6,7,8-tetrahydrofolate. The 161-residue stretch at 210–370 (NFTIMILGRR…LKCFINKIVD (161 aa)) folds into the TrmE-type G domain. Residue Asn-220 coordinates K(+). Residues 220-225 (NVGKST), 239-245 (TNIPGTT), and 264-267 (DTAG) contribute to the GTP site. Ser-224 is a Mg(2+) binding site. Residues Thr-239, Ile-241, and Thr-244 each contribute to the K(+) site. Residue Thr-245 coordinates Mg(2+). Lys-438 provides a ligand contact to (6S)-5-formyl-5,6,7,8-tetrahydrofolate.

It belongs to the TRAFAC class TrmE-Era-EngA-EngB-Septin-like GTPase superfamily. TrmE GTPase family. Homodimer. Heterotetramer of two MnmE and two MnmG subunits. The cofactor is K(+).

The protein resides in the cytoplasm. In terms of biological role, exhibits a very high intrinsic GTPase hydrolysis rate. Involved in the addition of a carboxymethylaminomethyl (cmnm) group at the wobble position (U34) of certain tRNAs, forming tRNA-cmnm(5)s(2)U34. The polypeptide is tRNA modification GTPase MnmE (Carsonella ruddii (strain PV)).